Reading from the N-terminus, the 848-residue chain is Nuclear cap-binding protein subunit 1 (848 aa).

The MIF4G domain occupies 8–228 (LLRIGEKGPE…DLLDRIQSLA (221 aa)). The tract at residues 767–786 (EDDKPSAMDVDSENGNPKKS) is disordered.

It belongs to the NCBP1 family. In terms of assembly, component of the nuclear cap-binding complex (CBC), a heterodimer composed of ABH1/CBP80 and CBP20 that interacts with m7GpppG-capped RNA. Expressed in all tissues analyzed, including roots, stems, leaves and flowers.

It is found in the nucleus. It localises to the cytoplasm. Functionally, component of the cap-binding complex (CBC), which binds cotranscriptionally to the 5'-cap of pre-mRNAs and is involved in various processes such as pre-mRNA splicing and RNA-mediated gene silencing (RNAi) by microRNAs (miRNAs). The CBC complex is involved in miRNA-mediated RNA interference and is required for primary miRNA processing. In the CBC complex, ABH1/CBP80 does not bind directly capped RNAs (m7GpppG-capped RNA) but is required to stabilize the movement of the N-terminal loop of CBP20 and lock the CBC into a high affinity cap-binding state with the cap structure. Involved in flowering regulation, possibly by regulating pre-mRNA splicing of FLC gene. Acts as a negative regulator of abscisic acid signaling in guard cells. In Arabidopsis thaliana (Mouse-ear cress), this protein is Nuclear cap-binding protein subunit 1 (ABH1).